We begin with the raw amino-acid sequence, 220 residues long: Cell division protein SepF (220 aa).

Positions 33–82 are disordered; that stretch reads GAARGYARRPREDRFEEEGYIDRAGREYDDRPAPREYDEPPIYRGGYDEP. A compositionally biased stretch (basic and acidic residues) spans 52 to 70; it reads YIDRAGREYDDRPAPREYD.

The protein belongs to the SepF family. As to quaternary structure, homodimer. Interacts with FtsZ.

The protein localises to the cytoplasm. In terms of biological role, cell division protein that is part of the divisome complex and is recruited early to the Z-ring. Probably stimulates Z-ring formation, perhaps through the cross-linking of FtsZ protofilaments. Its function overlaps with FtsA. In Mycobacterium sp. (strain JLS), this protein is Cell division protein SepF.